The chain runs to 215 residues: Transcription factor LAX PANICLE 1 (215 aa).

The segment at Met1–Ala48 is disordered. The tract at residues Leu40 to Arg53 is basic motif; degenerate. The 50-residue stretch at Leu40–Leu89 folds into the bHLH domain. A helix-loop-helix motif region spans residues His54 to Leu89.

The protein belongs to the bHLH protein family. In terms of assembly, efficient DNA binding requires dimerization with another bHLH protein. Interacts with LAX2. As to expression, expressed in the boundary between the shoot apical meristem (SAM) and the region of new meristem formation.

It localises to the nucleus. Its function is as follows. Transcription factor that seems to regulate organogenesis in postembryonic development. Involved in the regulation of shoot branching by controlling axillary meristem initiation. Functions in association with LAX2 to regulate the process of AM formation. Possesses transactivation activity in yeast. This is Transcription factor LAX PANICLE 1 from Oryza sativa subsp. japonica (Rice).